We begin with the raw amino-acid sequence, 466 residues long: Soluble pyridine nucleotide transhydrogenase (466 aa).

Residue 36 to 45 (ERYQNVGGGC) participates in FAD binding.

It belongs to the class-I pyridine nucleotide-disulfide oxidoreductase family. In terms of assembly, homooligomer; probable homooctamer. FAD is required as a cofactor.

It is found in the cytoplasm. It catalyses the reaction NAD(+) + NADPH = NADH + NADP(+). Functionally, conversion of NADPH, generated by peripheral catabolic pathways, to NADH, which can enter the respiratory chain for energy generation. The sequence is that of Soluble pyridine nucleotide transhydrogenase from Escherichia coli O6:H1 (strain CFT073 / ATCC 700928 / UPEC).